The following is a 195-amino-acid chain: dTTP/UTP pyrophosphatase (195 aa).

The active-site Proton acceptor is the D77.

It belongs to the Maf family. YhdE subfamily. A divalent metal cation is required as a cofactor.

The protein localises to the cytoplasm. The enzyme catalyses dTTP + H2O = dTMP + diphosphate + H(+). It carries out the reaction UTP + H2O = UMP + diphosphate + H(+). Nucleoside triphosphate pyrophosphatase that hydrolyzes dTTP and UTP. May have a dual role in cell division arrest and in preventing the incorporation of modified nucleotides into cellular nucleic acids. The sequence is that of dTTP/UTP pyrophosphatase from Flavobacterium psychrophilum (strain ATCC 49511 / DSM 21280 / CIP 103535 / JIP02/86).